Here is a 304-residue protein sequence, read N- to C-terminus: Acetaldehyde dehydrogenase 2 (304 aa).

Cys131 serves as the catalytic Acyl-thioester intermediate. NAD(+) is bound by residues 162-170 (SAGPGTRKN) and Asn273.

Belongs to the acetaldehyde dehydrogenase family.

It catalyses the reaction acetaldehyde + NAD(+) + CoA = acetyl-CoA + NADH + H(+). The sequence is that of Acetaldehyde dehydrogenase 2 from Dechloromonas aromatica (strain RCB).